Here is a 104-residue protein sequence, read N- to C-terminus: Flagellar hook-basal body complex protein FliE (104 aa).

Belongs to the FliE family.

The protein resides in the bacterial flagellum basal body. This chain is Flagellar hook-basal body complex protein FliE, found in Escherichia coli O139:H28 (strain E24377A / ETEC).